A 301-amino-acid polypeptide reads, in one-letter code: Small ribosomal subunit protein uS3 (301 aa).

A KH type-2 domain is found at 39–107 (VREYLKAKLK…PVAVNIEEVR (69 aa)). The interval 211 to 301 (GESPGAKLDA…AAAADGTKTE (91 aa)) is disordered. Over residues 224-244 (DEERKPRGPRRDARPGSDRPA) the composition is skewed to basic and acidic residues. Over residues 245 to 257 (PRGARAPRAPAGG) the composition is skewed to low complexity.

It belongs to the universal ribosomal protein uS3 family. In terms of assembly, part of the 30S ribosomal subunit. Forms a tight complex with proteins S10 and S14.

Functionally, binds the lower part of the 30S subunit head. Binds mRNA in the 70S ribosome, positioning it for translation. The sequence is that of Small ribosomal subunit protein uS3 from Polaromonas sp. (strain JS666 / ATCC BAA-500).